The sequence spans 252 residues: Trans-aconitate 2-methyltransferase (252 aa).

This sequence belongs to the methyltransferase superfamily. Tam family.

The protein localises to the cytoplasm. It carries out the reaction trans-aconitate + S-adenosyl-L-methionine = (E)-3-(methoxycarbonyl)pent-2-enedioate + S-adenosyl-L-homocysteine. Its function is as follows. Catalyzes the S-adenosylmethionine monomethyl esterification of trans-aconitate. In Escherichia coli O7:K1 (strain IAI39 / ExPEC), this protein is Trans-aconitate 2-methyltransferase.